Reading from the N-terminus, the 440-residue chain is 3-phosphoshikimate 1-carboxyvinyltransferase (440 aa).

Positions 19, 20, and 24 each coordinate 3-phosphoshikimate. A phosphoenolpyruvate-binding site is contributed by K19. The phosphoenolpyruvate site is built by G92 and R121. 3-phosphoshikimate contacts are provided by S166, Q168, D315, and K342. Residue Q168 participates in phosphoenolpyruvate binding. The Proton acceptor role is filled by D315. R346 and R399 together coordinate phosphoenolpyruvate.

It belongs to the EPSP synthase family. As to quaternary structure, monomer.

Its subcellular location is the cytoplasm. The enzyme catalyses 3-phosphoshikimate + phosphoenolpyruvate = 5-O-(1-carboxyvinyl)-3-phosphoshikimate + phosphate. Its pathway is metabolic intermediate biosynthesis; chorismate biosynthesis; chorismate from D-erythrose 4-phosphate and phosphoenolpyruvate: step 6/7. In terms of biological role, catalyzes the transfer of the enolpyruvyl moiety of phosphoenolpyruvate (PEP) to the 5-hydroxyl of shikimate-3-phosphate (S3P) to produce enolpyruvyl shikimate-3-phosphate and inorganic phosphate. The polypeptide is 3-phosphoshikimate 1-carboxyvinyltransferase (Leptospira interrogans serogroup Icterohaemorrhagiae serovar Lai (strain 56601)).